Reading from the N-terminus, the 1188-residue chain is DNA-directed RNA polymerase subunit beta (1188 aa).

The protein belongs to the RNA polymerase beta chain family. As to quaternary structure, the RNAP catalytic core consists of 2 alpha, 1 beta, 1 beta' and 1 omega subunit. When a sigma factor is associated with the core the holoenzyme is formed, which can initiate transcription.

It catalyses the reaction RNA(n) + a ribonucleoside 5'-triphosphate = RNA(n+1) + diphosphate. DNA-dependent RNA polymerase catalyzes the transcription of DNA into RNA using the four ribonucleoside triphosphates as substrates. This Streptococcus pyogenes serotype M1 protein is DNA-directed RNA polymerase subunit beta.